Consider the following 821-residue polypeptide: Protein SCAR1 (821 aa).

Disordered regions lie at residues 168–189 (KRAS…QRGR), 205–289 (TCTS…RGSS), and 577–625 (TSLP…RESK). A compositionally biased stretch (polar residues) spans 206–225 (CTSLSFSGRTSTSKTASTIE). The span at 226-250 (IESKSDLQEHRSFSFDSRSGGEKPK) shows a compositional bias: basic and acidic residues. Residues 252–265 (VSSSSRFTPGSRTI) show a composition bias toward polar residues. The segment covering 592 to 612 (SSSYISDNSDNDNRSVSMSEQ) has biased composition (low complexity). One can recognise a WH2 domain in the interval 756-774 (EAGDFLHQIRTKQFNLRRV). Residues 802-821 (QAVASDDGEGESDTWSDSDT) are disordered. The span at 807 to 821 (DDGEGESDTWSDSDT) shows a compositional bias: acidic residues.

The protein belongs to the SCAR/WAVE family. Binds BRK1 and actin. Interacts with SPK1, ABI1 and ABI2. Expressed in expanding cotyledons, expanding leaves and expanding siliques containing developing embryos. Detected in unopened flower buds and in the expanding tip region of roots. Reduced expression in mature leaves and mature cotyledons.

It localises to the cytoplasm. The protein localises to the cytoskeleton. In terms of biological role, involved in regulation of actin and microtubule organization. Part of a WAVE complex that activates the Arp2/3 complex. Regulates trichome branch positioning and expansion. The chain is Protein SCAR1 (SCAR1) from Arabidopsis thaliana (Mouse-ear cress).